The following is a 53-amino-acid chain: Mannose/glucose-specific lectin alpha 1 chain (53 aa).

Belongs to the leguminous lectin family. In terms of assembly, tetramer of two alpha and two beta chains.

The sequence is that of Mannose/glucose-specific lectin alpha 1 chain from Lathyrus ochrus (Cyprus-vetch).